The primary structure comprises 761 residues: Xaa-Pro dipeptidyl-peptidase (761 aa).

Catalysis depends on charge relay system residues S347, D467, and H497.

It belongs to the peptidase S15 family. In terms of assembly, homodimer.

The protein resides in the cytoplasm. The enzyme catalyses Hydrolyzes Xaa-Pro-|- bonds to release unblocked, N-terminal dipeptides from substrates including Ala-Pro-|-p-nitroanilide and (sequentially) Tyr-Pro-|-Phe-Pro-|-Gly-Pro-|-Ile.. Functionally, removes N-terminal dipeptides sequentially from polypeptides having unsubstituted N-termini provided that the penultimate residue is proline. This Streptococcus agalactiae serotype Ia (strain ATCC 27591 / A909 / CDC SS700) protein is Xaa-Pro dipeptidyl-peptidase.